A 112-amino-acid polypeptide reads, in one-letter code: cAMP-regulated phosphoprotein 19 (112 aa).

N-acetylmethionine is present on methionine 1. The span at methionine 1–alanine 11 shows a compositional bias: low complexity. The disordered stretch occupies residues methionine 1–leucine 49. At serine 2 the chain carries N-acetylserine. Serine 2 and serine 23 each carry phosphoserine. The segment covering glutamate 12–leucine 32 has biased composition (basic and acidic residues). Residues serine 62 and serine 104 each carry the phosphoserine; by GWL modification. Positions asparagine 74–glycine 112 are disordered. Serine 104 carries the post-translational modification Phosphoserine; by PKA. Lysine 109 carries the N6-acetyllysine modification.

It belongs to the endosulfine family. Interacts (when phosphorylated at Ser-62) with PPP2R2D. Interacts with SNCA. Interacts with PPP2R2A; the interaction is direct and this interaction inhibits PP2A activity. Post-translationally, phosphorylation at Ser-62 by MASTL/GWL during mitosis is essential for interaction with PPP2R2D (PR55-delta) and subsequent inactivation of PP2A. Phosphorylated by PKA.

The protein resides in the cytoplasm. In terms of biological role, protein phosphatase inhibitor that specifically inhibits protein phosphatase 2A (PP2A) during mitosis. Inhibition of PP2A is enhanced when ARPP19 is phosphorylated. When phosphorylated at Ser-62 during mitosis, specifically interacts with PPP2R2D (PR55-delta) and inhibits its activity, leading to inactivation of PP2A, an essential condition to keep cyclin-B1-CDK1 activity high during M phase. May indirectly enhance GAP-43 expression by binding to the NGF-regulatory region of its mRNA. This chain is cAMP-regulated phosphoprotein 19 (Arpp19), found in Mus musculus (Mouse).